Consider the following 930-residue polypeptide: Progesterone receptor (930 aa).

Residues Met-1 to Ala-11 are compositionally biased toward basic and acidic residues. Disordered regions lie at residues Met-1–Ala-133 and Leu-148–Ala-260. An AF3; mediates transcriptional activation region spans residues Met-1–Leu-165. Residues Met-1–Gln-565 are modulating, Pro-Rich. Lys-7 is covalently cross-linked (Glycyl lysine isopeptide (Lys-Gly) (interchain with G-Cter in SUMO)). Ser-20 is modified (phosphoserine). Polar residues predominate over residues Gln-38–Val-49. Positions Leu-56 to Leu-60 match the LXXL motif 1 motif. Phosphoserine is present on Ser-82. The LXXL motif 2 motif lies at Leu-116–Leu-120. At Ser-131 the chain carries Phosphoserine. The mediates transcriptional transrepression stretch occupies residues Met-166–His-304. Residues Lys-184–Arg-188 carry the Nuclear localization signal motif. Residues Pro-187 to Pro-204 are compositionally biased toward low complexity. 2 positions are modified to phosphoserine: Ser-191 and Ser-212. The residue at position 293 (Ser-293) is a Phosphoserine; by MAPK1. Residues Ala-334 to Asp-356 form a disordered region. Residue Ser-344 is modified to Phosphoserine; by MAPK. Lys-387 is covalently cross-linked (Glycyl lysine isopeptide (Lys-Gly) (interchain with G-Cter in SUMO); alternate). Lys-387 participates in a covalent cross-link: Glycyl lysine isopeptide (Lys-Gly) (interchain with G-Cter in ubiquitin); alternate. Ser-399 carries the phosphoserine; by CDK2 modification. The tract at residues Asp-415–Ser-454 is disordered. Residues Ala-420–Val-430 are compositionally biased toward pro residues. A compositionally biased stretch (low complexity) spans Pro-431–Ser-454. An AF1; mediates transcriptional activation region spans residues Ser-457–Arg-547. Residue Lys-532 forms a Glycyl lysine isopeptide (Lys-Gly) (interchain with G-Cter in SUMO) linkage. The segment at residues Lys-566–Phe-640 is a DNA-binding region (nuclear receptor). 2 consecutive NR C4-type zinc fingers follow at residues Cys-568–Cys-588 and Cys-604–Cys-628. Ser-673 is subject to Phosphoserine. Positions Gln-676 to Ile-910 constitute an NR LBD domain. The AF2; mediates transcriptional activation stretch occupies residues Leu-684–Lys-930. Arg-763 is a binding site for progesterone.

It belongs to the nuclear hormone receptor family. NR3 subfamily. As to quaternary structure, interacts with SMARD1 and UNC45A. Interacts with CUEDC2; the interaction promotes ubiquitination, decreases sumoylation, and represses transcriptional activity. Interacts with PIAS3; the interaction promotes sumoylation of PR in a hormone-dependent manner, inhibits DNA-binding, and alters nuclear export. Interacts with SP1; the interaction requires ligand-induced phosphorylation on Ser-344 by ERK1/2-MAPK. Interacts with PRMT2. Interacts with NCOA2 and NCOA1. Interacts with KLF9. Interacts with GTF2B. Post-translationally, phosphorylated on multiple serine sites. Several of these sites are hormone-dependent. Phosphorylation on Ser-293 is highly hormone-dependent and modulates ubiquitination and sumoylation on Lys-387. Phosphorylation on Ser-102 and Ser-344 also requires induction by hormone. Basal phosphorylation on Ser-82, Ser-191 and Ser-399 is increased in response to progesterone and can be phosphorylated in vitro by the CDK2-A1 complex. Increased levels of phosphorylation on Ser-399 also in the presence of EGF, heregulin, IGF, PMA and FBS. Phosphorylation at this site by CDK2 is ligand-independent, and increases nuclear translocation and transcriptional activity. Phosphorylation at Ser-293, but not at Ser-191, is impaired during the G(2)/M phase of the cell cycle. Phosphorylation on Ser-344 by ERK1/2 MAPK is required for interaction with SP1. In terms of processing, sumoylation is hormone-dependent and represses transcriptional activity. Sumoylation on all three sites is enhanced by PIAS3. Desumoylated by SENP1. Sumoylation on Lys-387, the main site of sumoylation, is repressed by ubiquitination on the same site, and modulated by phosphorylation at Ser-293. Ubiquitination is hormone-dependent and represses sumoylation on the same site. Promoted by MAPK-mediated phosphorylation on Ser-293. Ubiquitinated by UBR5, leading to its degradation: UBR5 specifically recognizes and binds ligand-bound PGR when it is not associated with coactivators (NCOAs). In presence of NCOAs, the UBR5-degron is not accessible, preventing its ubiquitination and degradation. Post-translationally, palmitoylated by ZDHHC7 and ZDHHC21. Palmitoylation is required for plasma membrane targeting and for rapid intracellular signaling via ERK and AKT kinases and cAMP generation.

The protein localises to the nucleus. It localises to the cytoplasm. Functionally, the steroid hormones and their receptors are involved in the regulation of eukaryotic gene expression and affect cellular proliferation and differentiation in target tissues. Transcriptional activator of several progesteron-dependent promoters in a variety of cell types. Involved in activation of SRC-dependent MAPK signaling on hormone stimulation. The polypeptide is Progesterone receptor (PGR) (Oryctolagus cuniculus (Rabbit)).